A 189-amino-acid polypeptide reads, in one-letter code: UPF0340 protein SAG0103 (189 aa).

This sequence belongs to the UPF0340 family.

The protein is UPF0340 protein SAG0103 of Streptococcus agalactiae serotype V (strain ATCC BAA-611 / 2603 V/R).